We begin with the raw amino-acid sequence, 130 residues long: Aspartate 1-decarboxylase (130 aa).

S25 acts as the Schiff-base intermediate with substrate; via pyruvic acid in catalysis. S25 is subject to Pyruvic acid (Ser). T57 lines the substrate pocket. Y58 serves as the catalytic Proton donor. G73 to A75 lines the substrate pocket.

The protein belongs to the PanD family. Heterooctamer of four alpha and four beta subunits. The cofactor is pyruvate. In terms of processing, is synthesized initially as an inactive proenzyme, which is activated by self-cleavage at a specific serine bond to produce a beta-subunit with a hydroxyl group at its C-terminus and an alpha-subunit with a pyruvoyl group at its N-terminus.

Its subcellular location is the cytoplasm. The enzyme catalyses L-aspartate + H(+) = beta-alanine + CO2. It participates in cofactor biosynthesis; (R)-pantothenate biosynthesis; beta-alanine from L-aspartate: step 1/1. Functionally, catalyzes the pyruvoyl-dependent decarboxylation of aspartate to produce beta-alanine. This Myxococcus xanthus (strain DK1622) protein is Aspartate 1-decarboxylase.